A 421-amino-acid chain; its full sequence is MSTISTSTDSKLDNLGLSVTSRRNQILFYLSKALNLAHLLRSDSLQKSFLDALKQSATDSELLHKNLDEIKFLQNEKLNNEKLLEQEQNEANDYRLKVERLEHKISDYVQEINSLNSQLQIQKSNPEKHEDAVSQNRLRGSLDTVSSPSKTHKANKDEKATRLHLIIANLKKALKEKDAEVLNLQSHVSSKESELDRFKIKLETEESNWKVRLQVLESKLATQDRKLRMQKKSTERKSLLVSPRVSSPKLFSPSKQAIMGTRQPNATSGSPLSVTPFLQKTSTSIGLSSSPPQSSPSAQSSQPFSRDKYPHSMTVSPSNARYLKKHLDDTIPSNVSDINHNDHLKIPQSPSSLSPSKIPIRKKRKLKDTVSNCEFTEEDSESSFLLETIQPTKSTLRRSISPLKKRNDEINELKKGFTMKK.

2 disordered regions span residues 122 to 158 (QKSN…NKDE) and 224 to 316 (DRKL…MTVS). The segment covering 133 to 149 (VSQNRLRGSLDTVSSPS) has biased composition (polar residues). A compositionally biased stretch (basic and acidic residues) spans 224–238 (DRKLRMQKKSTERKS). Residues 262–287 (RQPNATSGSPLSVTPFLQKTSTSIGL) are compositionally biased toward polar residues. Over residues 288–304 (SSSPPQSSPSAQSSQPF) the composition is skewed to low complexity.

In terms of assembly, component of a monopolin-like complex composed of pcs1 and mde4. The complex associates with the kinetochore.

The protein resides in the nucleus. It localises to the chromosome. It is found in the centromere. The monopolin-like pcs1/mde4 complex is essential for accurate chromosome segregation during mitosis and meiosis II. May clamp together microtubule binding sites on the same kinetochore, preventing merotelic attachment of microtubules. The polypeptide is Monopolin complex subunit mde4 (mde4) (Schizosaccharomyces pombe (strain 972 / ATCC 24843) (Fission yeast)).